The following is a 130-amino-acid chain: uncharacterized protein (130 aa).

A helical membrane pass occupies residues 8 to 28 (PFILMIIVLGLFLVSIGGYYY).

The protein resides in the membrane. This is an uncharacterized protein from Bacillus anthracis.